The chain runs to 179 residues: Large ribosomal subunit protein uL15 (179 aa).

The protein belongs to the universal ribosomal protein uL15 family. As to quaternary structure, part of the 50S ribosomal subunit.

Binds to the 23S rRNA. The chain is Large ribosomal subunit protein uL15 from Archaeoglobus fulgidus (strain ATCC 49558 / DSM 4304 / JCM 9628 / NBRC 100126 / VC-16).